We begin with the raw amino-acid sequence, 591 residues long: L-fucose isomerase (591 aa).

Active-site proton acceptor residues include Glu338 and Asp362. Positions 338, 362, and 529 each coordinate Mn(2+).

Belongs to the L-fucose isomerase family. Mn(2+) serves as cofactor.

The protein localises to the cytoplasm. The enzyme catalyses L-fucose = L-fuculose. The protein operates within carbohydrate degradation; L-fucose degradation; L-lactaldehyde and glycerone phosphate from L-fucose: step 1/3. Converts the aldose L-fucose into the corresponding ketose L-fuculose. This chain is L-fucose isomerase, found in Bacteroides thetaiotaomicron (strain ATCC 29148 / DSM 2079 / JCM 5827 / CCUG 10774 / NCTC 10582 / VPI-5482 / E50).